We begin with the raw amino-acid sequence, 246 residues long: MWIGVISLFPEMFKAITEFGVTGRAVKHNLLKVECWNPRNFTFDKHKTVDDRPYGGGPGMLMMVQPLRDAIHTAKAAAGEGAKVIYLSPQGRKLDQDGVTELAQNQKLILVCGRYEGIDERLIQTEIDEEWSIGDYVLTGGELPAMTLIDAVARFIPGVLGKQASAEEDSFADGLLDCPHYTRPEVLEGLTVPPVLMSGHHEEIRKWRLKQSLQRTWFRRPELLEGLALTDEQRKLLKEAQAEHNS.

Residues Gly-113 and 133–138 (IGDYVL) contribute to the S-adenosyl-L-methionine site.

The protein belongs to the RNA methyltransferase TrmD family. In terms of assembly, homodimer.

It is found in the cytoplasm. It carries out the reaction guanosine(37) in tRNA + S-adenosyl-L-methionine = N(1)-methylguanosine(37) in tRNA + S-adenosyl-L-homocysteine + H(+). Functionally, specifically methylates guanosine-37 in various tRNAs. In Haemophilus influenzae (strain 86-028NP), this protein is tRNA (guanine-N(1)-)-methyltransferase.